We begin with the raw amino-acid sequence, 240 residues long: tRNA (guanine-N(1)-)-methyltransferase (240 aa).

S-adenosyl-L-methionine-binding positions include G110 and 129-134; that span reads LGDFVL.

This sequence belongs to the RNA methyltransferase TrmD family. As to quaternary structure, homodimer.

It is found in the cytoplasm. The enzyme catalyses guanosine(37) in tRNA + S-adenosyl-L-methionine = N(1)-methylguanosine(37) in tRNA + S-adenosyl-L-homocysteine + H(+). In terms of biological role, specifically methylates guanosine-37 in various tRNAs. This Clostridium botulinum (strain Loch Maree / Type A3) protein is tRNA (guanine-N(1)-)-methyltransferase.